The sequence spans 221 residues: NAD(P)H-hydrate epimerase (221 aa).

The 211-residue stretch at 9 to 219 folds into the YjeF N-terminal domain; sequence MRELETAAVK…NIGLPKELLS (211 aa). Position 60–64 (60–64) interacts with (6S)-NADPHX; it reads GNGGD. 2 residues coordinate K(+): asparagine 61 and aspartate 131. (6S)-NADPHX-binding positions include 135-141, tyrosine 146, and aspartate 164; that span reads GIGFKGE. Serine 167 provides a ligand contact to K(+).

This sequence belongs to the NnrE/AIBP family. K(+) serves as cofactor.

It catalyses the reaction (6R)-NADHX = (6S)-NADHX. It carries out the reaction (6R)-NADPHX = (6S)-NADPHX. Functionally, catalyzes the epimerization of the S- and R-forms of NAD(P)HX, a damaged form of NAD(P)H that is a result of enzymatic or heat-dependent hydration. This is a prerequisite for the S-specific NAD(P)H-hydrate dehydratase to allow the repair of both epimers of NAD(P)HX. This is NAD(P)H-hydrate epimerase from Elusimicrobium minutum (strain Pei191).